The primary structure comprises 146 residues: 3-dehydroquinate dehydratase (146 aa).

Catalysis depends on Tyr-23, which acts as the Proton acceptor. Residues Asn-79, His-85, and Asp-92 each coordinate substrate. His-105 (proton donor) is an active-site residue. Substrate contacts are provided by residues 106–107 (IS) and Arg-116.

It belongs to the type-II 3-dehydroquinase family. In terms of assembly, homododecamer.

The enzyme catalyses 3-dehydroquinate = 3-dehydroshikimate + H2O. The protein operates within metabolic intermediate biosynthesis; chorismate biosynthesis; chorismate from D-erythrose 4-phosphate and phosphoenolpyruvate: step 3/7. Catalyzes a trans-dehydration via an enolate intermediate. The sequence is that of 3-dehydroquinate dehydratase from Variovorax paradoxus (strain S110).